The following is a 358-amino-acid chain: Uroporphyrinogen decarboxylase (358 aa).

Residues 29-33 (RQAGR), phenylalanine 48, aspartate 79, tyrosine 155, serine 210, and histidine 330 each bind substrate.

This sequence belongs to the uroporphyrinogen decarboxylase family. In terms of assembly, homodimer.

The protein localises to the cytoplasm. It catalyses the reaction uroporphyrinogen III + 4 H(+) = coproporphyrinogen III + 4 CO2. The protein operates within porphyrin-containing compound metabolism; protoporphyrin-IX biosynthesis; coproporphyrinogen-III from 5-aminolevulinate: step 4/4. Its function is as follows. Catalyzes the decarboxylation of four acetate groups of uroporphyrinogen-III to yield coproporphyrinogen-III. This is Uroporphyrinogen decarboxylase from Bordetella pertussis (strain Tohama I / ATCC BAA-589 / NCTC 13251).